The following is a 239-amino-acid chain: RBPJ-interacting and tubulin-associated protein 1 (239 aa).

Positions 12–24 match the Nuclear export signal motif; it reads LDLSITGHSTALP. Disordered regions lie at residues 62–97 and 149–239; these read APPS…TPRK and LVQQ…PPWK. A Nuclear localization signal motif is present at residues 93-109; the sequence is GTPRKKIQYRVKSRTPS. Residues 129 to 158 are interaction with RBPJ/RBPSUH; the sequence is WVKKEDTVKIRPLLWSPSPRLVQQSSMQNA. Polar residues-rich tracts occupy residues 149–159 and 203–221; these read LVQQSSMQNAK and RQRQ…SCSG. The tract at residues 158–239 is interaction with tubulin; sequence AKQGPLRAVH…VKMQERPPWK (82 aa).

Belongs to the RITA family. As to quaternary structure, interacts with rbpj/rbpsuh.

It localises to the cytoplasm. Its subcellular location is the nucleus. In terms of biological role, tubulin-binding protein that acts as a negative regulator of Notch signaling pathway. Shuttles between the cytoplasm and the nucleus and mediates the nuclear export of rbpj/rbpsuh, thereby preventing the interaction between rbpj/rbpsuh and NICD product of Notch proteins (Notch intracellular domain), leading to down-regulate Notch-mediated transcription. May play a role in neurogenesis. This is RBPJ-interacting and tubulin-associated protein 1 (rita1) from Xenopus laevis (African clawed frog).